The primary structure comprises 514 residues: Periplasmic [NiFeSe] hydrogenase large subunit (514 aa).

Glutamate 52 is a binding site for Fe cation. Residues cysteine 71 and cysteine 74 each contribute to the Ni(2+) site. 2 residues coordinate Fe cation: cysteine 74 and isoleucine 445. 2 residues coordinate Ni(2+): selenocysteine 493 and cysteine 496. Selenocysteine 493 is a non-standard amino acid (selenocysteine). 2 residues coordinate Fe cation: cysteine 496 and histidine 499.

This sequence belongs to the [NiFe]/[NiFeSe] hydrogenase large subunit family. In terms of assembly, heterodimer of a large and a small subunit. The cofactor is Fe cation. Ni(2+) is required as a cofactor.

It is found in the periplasm. It catalyses the reaction H2 + A = AH2. The protein is Periplasmic [NiFeSe] hydrogenase large subunit of Desulfomicrobium baculatum (Desulfovibrio baculatus).